A 2912-amino-acid chain; its full sequence is Fibrillin-2 (2912 aa).

Positions 1 to 28 (MGRRRRLCLQLYFLWLGCVVLWAQGTAG) are cleaved as a signal peptide. Residues 27–52 (AGQPQPPPPKPPRPQPPPQQVRSATA) form a disordered region. Positions 29–77 (QPQPPPPKPPRPQPPPQQVRSATAGSEGGFLAPEYREEGAAVASRVRRR) are excised as a propeptide. Positions 30–45 (PQPPPPKPPRPQPPPQ) are enriched in pro residues. 3 consecutive EGF-like domains span residues 111-142 (IVPI…STCG), 145-176 (SIQQ…TYCG), and 176-208 (GQPV…PQCE). Disulfide bonds link C115–C124, C119–C130, C132–C141, C149–C159, C153–C164, C166–C175, C180–C190, C184–C196, and C198–C207. The tract at residues 149–359 (CSVRCMNGGT…VTSTDGSRCI (211 aa)) is interaction with MFAP4. The 53-residue stretch at 214–266 (GPCFTQVNNQMCQGQLTGIVCTKTLCCATIGRAWGHPCEMCPAQPQPCRRGFI) folds into the TB 1 domain. Residues 276–317 (DVDECQAIPGICQGGNCINTVGSFECRCPAGHKQSETTQKCE) form the EGF-like 4; calcium-binding domain. 6 disulfides stabilise this stretch: C280–C292, C287–C301, C303–C316, C322–C334, C329–C343, and C345–C358. S298 carries O-linked (Glc) serine glycosylation. An EGF-like 5; calcium-binding domain is found at 318–359 (DIDECSIIPGICETGECSNTVGSYFCVCPRGYVTSTDGSRCI). An O-linked (Glc) serine glycan is attached at S340. Residues 364-417 (GMCFSGLVNGRCAQELPGRMTKMQCCCEPGRCWGIGTIPEACPVRGSEEYRRLC) form the TB 2 domain. N492 is a glycosylation site (N-linked (GlcNAc...) asparagine). In terms of domain architecture, EGF-like 6 spans 494 to 534 (TIDICKHHANLCLNGRCIPTVSSYRCECNMGYKQDANGDCI). Cystine bridges form between C498-C510, C505-C519, C521-C533, C539-C549, C544-C558, C560-C573, C579-C591, C586-C600, C602-C615, C621-C632, C627-C641, C643-C656, C662-C673, C668-C682, and C684-C697. O-linked (Glc) serine glycosylation is present at S516. The EGF-like 7; calcium-binding domain occupies 535 to 574 (DVDECTSNPCTNGDCVNTPGSYYCKCHAGFQRTPTKQACI). O-linked (Glc) serine glycosylation occurs at S555. The region spanning 575–616 (DIDECIQNGVLCKNGRCVNTDGSFQCICNAGFELTTDGKNCV) is the EGF-like 8; calcium-binding domain. A glycan (O-linked (Glc) serine) is linked at S597. Positions 617–657 (DHDECTTTNMCLNGMCINEDGSFKCICKPGFVLAPNGRYCT) constitute an EGF-like 9; calcium-binding domain. S638 carries an O-linked (Glc) serine glycan. The 41-residue stretch at 658–698 (DVDECQTPGICMNGHCINSEGSFRCDCPPGLAVGMDGRVCV) folds into the EGF-like 10; calcium-binding domain. S679 is a glycosylation site (O-linked (Glc) serine). Residues 704–756 (STCYGGIKKGVCVRPFPGAVTKSECCCANPDYGFGEPCQPCPAKNSAEFHGLC) form the TB 3 domain. Positions 768–809 (DINECALDPDICANGICENLRGSYRCNCNSGYEPDASGRNCI) constitute an EGF-like 11; calcium-binding domain. 9 disulfide bridges follow: C772/C784, C779/C793, C795/C808, C814/C826, C821/C835, C837/C850, C856/C866, C861/C875, and C877/C890. An EGF-like 12; calcium-binding domain is found at 810–851 (DIDECLVNRLLCDNGLCRNTPGSYSCTCPPGYVFRTETETCE). S832 carries an O-linked (Glc) serine glycan. Residues 852-891 (DINECESNPCVNGACRNNLGSFNCECSPGSKLSSTGLICI) enclose the EGF-like 13; calcium-binding domain. S872 carries an O-linked (Glc) serine glycan. A TB 4 domain is found at 896-947 (GTCWLNIQDSRCEVNINGATLKSECCATLGAAWGSPCERCELDTACPRGLAR). Residues 955–996 (DVNECEVFPGVCPNGRCVNSKGSFHCECPEGLTLDGTGRVCL) form the EGF-like 14; calcium-binding domain. Cystine bridges form between C959–C971, C966–C980, and C982–C995. The O-linked (Glc) serine glycan is linked to S977. Positions 1001–1052 (EQCYLKWDEDECIHPVPGKFRMDACCCAVGAAWGTECEECPKPGTKEYETLC) constitute a TB 5 domain. In terms of domain architecture, EGF-like 15; calcium-binding spans 1073 to 1114 (DINECKAFPGMCTYGKCRNTIGSFKCRCNSGFALDMEERNCT). 36 cysteine pairs are disulfide-bonded: C1077-C1089, C1084-C1098, C1100-C1113, C1119-C1131, C1126-C1140, C1142-C1156, C1162-C1174, C1169-C1183, C1185-C1198, C1204-C1216, C1211-C1225, C1227-C1240, C1246-C1257, C1253-C1266, C1268-C1281, C1287-C1299, C1294-C1308, C1310-C1323, C1329-C1341, C1336-C1350, C1352-C1365, C1371-C1384, C1378-C1393, C1395-C1406, C1412-C1425, C1419-C1434, C1436-C1447, C1453-C1465, C1460-C1474, C1476-C1489, C1495-C1506, C1501-C1515, C1517-C1530, C1536-C1547, C1542-C1556, and C1558-C1571. S1095 carries an O-linked (Glc) serine glycan. N-linked (GlcNAc...) asparagine glycosylation is present at N1112. The region spanning 1115–1157 (DIDECRISPDLCGSGICVNTPGSFECECFEGYESGFMMMKNCM) is the EGF-like 16; calcium-binding domain. In terms of domain architecture, EGF-like 17; calcium-binding spans 1158 to 1199 (DIDECERNPLLCRGGTCVNTEGSFQCDCPLGHELSPSREDCV). S1180 carries O-linked (Glc) serine glycosylation. The EGF-like 18; calcium-binding domain maps to 1200 to 1241 (DINECSLSDNLCRNGKCVNMIGTYQCSCNPGYQATPDRQGCT). An O-linked (Glc) threonine glycan is attached at T1222. Positions 1242–1282 (DIDECMIMNGGCDTQCTNSEGSYECSCSEGYALMPDGRSCA) constitute an EGF-like 19; calcium-binding domain. S1263 carries an O-linked (Glc) serine glycan. Residues 1283 to 1324 (DIDECENNPDICDGGQCTNIPGEYRCLCYDGFMASMDMKTCI) enclose the EGF-like 20; calcium-binding domain. One can recognise an EGF-like 21; calcium-binding domain in the interval 1325-1366 (DVNECDLNSNICMFGECENTKGSFICHCQLGYSVKKGTTGCT). The O-linked (Glc) serine glycan is linked to S1347. Positions 1367–1407 (DVDECEIGAHNCDMHASCLNIPGSFKCSCREGWIGNGIKCI) constitute an EGF-like 22; calcium-binding domain. S1390 is a glycosylation site (O-linked (Glc) serine). An EGF-like 23; calcium-binding domain is found at 1408–1448 (DLDECSNGTHQCSINAQCVNTPGSYRCACSEGFTGDGFTCS). N1414 carries an N-linked (GlcNAc...) asparagine glycan. One can recognise an EGF-like 24; calcium-binding domain in the interval 1449-1490 (DVDECAENINLCENGQCLNVPGAYRCECEMGFTPASDSRSCQ). The region spanning 1491–1531 (DIDECSFQNICVFGTCNNLPGMFHCICDDGYELDRTGGNCT) is the EGF-like 25; calcium-binding domain. The N-linked (GlcNAc...) asparagine glycan is linked to N1529. Positions 1532–1572 (DIDECADPINCVNGLCVNTPGRYECNCPPDFQLNPTGVGCV) constitute an EGF-like 26; calcium-binding domain. The 57-residue stretch at 1577–1633 (GNCYLKFGPRGDGSLSCNTEIGVGVSRSSCCCSLGKAWGNPCETCPPVNSTEYYTLC) folds into the TB 6 domain. N1625 is a glycosylation site (N-linked (GlcNAc...) asparagine). The region spanning 1650-1691 (DIDECQELPGLCQGGNCINTFGSFQCECPQGYYLSEDTRICE) is the EGF-like 27; calcium-binding domain. 6 disulfides stabilise this stretch: C1654–C1666, C1661–C1675, C1677–C1690, C1696–C1708, C1703–C1717, and C1719–C1732. S1672 is a glycosylation site (O-linked (Glc) serine). The EGF-like 28; calcium-binding domain occupies 1692–1733 (DIDECFAHPGVCGPGTCYNTLGNYTCICPPEYMQVNGGHNCM). A glycan (N-linked (GlcNAc...) asparagine) is linked at N1714. The segment at 1735-2171 (MRKSFCYRSY…VPSLHDTRED (437 aa)) is interaction with MFAP4. Residues 1738–1791 (SFCYRSYNGTTCENELPFNVTKRMCCCTYNVGKAWNKPCEPCPTPGTADFKTIC) form the TB 7 domain. N1745 and N1756 each carry an N-linked (GlcNAc...) asparagine glycan. The 42-residue stretch at 1808 to 1849 (DIDECKEIPGICANGVCINQIGSFRCECPTGFSYNDLLLVCE) folds into the EGF-like 29; calcium-binding domain. Disulfide bonds link C1812–C1824, C1819–C1833, C1835–C1848, C1854–C1867, C1861–C1876, C1878–C1890, C1896–C1908, C1903–C1917, C1919–C1932, C1938–C1948, C1943–C1957, C1959–C1971, C1977–C1990, C1985–C1999, C2001–C2014, C2020–C2032, C2027–C2041, C2043–C2054, C2060–C2072, C2067–C2081, and C2083–C2096. The EGF-like 30; calcium-binding domain maps to 1850–1891 (DIDECSNGDNLCQRNADCINSPGSYRCECAAGFKLSPNGACV). The O-linked (Glc) serine glycan is linked to S1873. The 42-residue stretch at 1892-1933 (DRNECLEIPNVCSHGLCVDLQGSYQCICHNGFKASQDQTMCM) folds into the EGF-like 31; calcium-binding domain. The EGF-like 32; calcium-binding domain maps to 1934–1972 (DVDECERHPCGNGTCKNTVGSYNCLCYPGFELTHNNDCL). An N-linked (GlcNAc...) asparagine glycan is attached at N1945. A glycan (O-linked (Glc) serine) is linked at S1954. An EGF-like 33; calcium-binding domain is found at 1973-2015 (DIDECSSFFGQVCRNGRCFNEIGSFKCLCNEGYELTPDGKNCI). O-linked (Glc) serine glycosylation is present at S1996. Residues 2016–2055 (DTNECVALPGSCSPGTCQNLEGSFRCICPPGYEVKSENCI) enclose the EGF-like 34; calcium-binding domain. Residues 2056–2097 (DINECDEDPNICLFGSCTNTPGGFQCLCPPGFVLSDNGRRCF) form the EGF-like 35; calcium-binding domain. A TB 8 domain is found at 2102 to 2155 (SFCFTNFENGKCSVPKAFNTTKAKCCCSKMPGEGWGDPCELCPKDDEVAFQDLC). N2120 carries N-linked (GlcNAc...) asparagine glycosylation. Residues 2171 to 2212 (DVNECLESPGICSNGQCINTDGSFRCECPMGYNLDYTGVRCV) form the EGF-like 36; calcium-binding domain. 15 cysteine pairs are disulfide-bonded: C2175–C2187, C2182–C2196, C2198–C2211, C2217–C2228, C2223–C2237, C2239–C2251, C2257–C2268, C2264–C2277, C2279–C2292, C2298–C2312, C2305–C2321, C2323–C2336, C2342–C2354, C2349–C2363, and C2365–C2378. O-linked (Glc) serine glycosylation occurs at S2193. In terms of domain architecture, EGF-like 37; calcium-binding spans 2213 to 2252 (DTDECSIGNPCGNGTCTNVIGSFECNCNEGFEPGPMMNCE). N2225 carries N-linked (GlcNAc...) asparagine glycosylation. Residues 2253–2293 (DINECAQNPLLCAFRCMNTFGSYECTCPIGYALREDQKMCK) enclose the EGF-like 38; calcium-binding domain. O-linked (Glc) serine glycosylation is present at S2274. The EGF-like 39; calcium-binding domain maps to 2294 to 2337 (DLDECAEGLHDCESRGMMCKNLIGTFMCICPPGMARRPDGEGCV). In terms of domain architecture, EGF-like 40; calcium-binding spans 2338 to 2379 (DENECRTKPGICENGRCVNIIGSYRCECNEGFQSSSSGTECL). Residue S2360 is glycosylated (O-linked (Glc) serine). The 54-residue stretch at 2384–2437 (GLCFAEVLQTICQMASSSRNLVTKSECCCDGGRGWGHQCELCPLPGTAQYKKIC) folds into the TB 9 domain. An EGF-like 41; calcium-binding domain is found at 2449–2490 (DIDECKVMPNLCTNGQCINTMGSFRCFCKVGYTTDISGTSCI). 21 disulfide bridges follow: C2453-C2465, C2460-C2474, C2476-C2489, C2495-C2506, C2502-C2515, C2517-C2530, C2536-C2547, C2543-C2556, C2558-C2569, C2575-C2588, C2582-C2597, C2599-C2612, C2618-C2628, C2624-C2637, C2639-C2652, C2658-C2669, C2664-C2678, C2680-C2693, C2699-C2710, C2706-C2719, and C2721-C2733. S2471 is a glycosylation site (O-linked (Glc) serine). An EGF-like 42; calcium-binding domain is found at 2491–2531 (DLDECSQSPKPCNYICKNTEGSYQCSCPRGYVLQEDGKTCK). S2512 carries O-linked (Glc) serine glycosylation. The 39-residue stretch at 2532–2570 (DLDECQTKQHNCQFLCVNTLGGFTCKCPPGFTQHHTACI) folds into the EGF-like 43; calcium-binding domain. Residues 2571–2613 (DNNECGSQPSLCGAKGICQNTPGSFSCECQRGFSLDATGLNCE) enclose the EGF-like 44; calcium-binding domain. A glycan (O-linked (Glc) serine) is linked at S2594. Residues 2614-2653 (DVDECDGNHRCQHGCQNILGGYRCGCPQGYIQHYQWNQCV) enclose the EGF-like 45; calcium-binding domain. The region spanning 2654–2694 (DENECSNPNACGSASCYNTLGSYKCACPSGFSFDQFSSACH) is the EGF-like 46; calcium-binding domain. S2675 carries an O-linked (Glc) serine glycan. One can recognise an EGF-like 47; calcium-binding domain in the interval 2695-2734 (DVNECSSSKNPCNYGCSNTEGGYLCGCPPGYYRVGQGHCV). An N-linked (GlcNAc...) asparagine glycan is attached at N2808.

Belongs to the fibrillin family. Interacts with BMP2, BMP4, BMP7, BMP10 and GDF5. Interacts with MFAP2 and MFAP5. Interacts with ADAMTSL5. Interacts with MFAP4. In terms of processing, N-glycosylated. O-glycosylated on serine residues by POGLUT2 and POGLUT3. In terms of tissue distribution, almost exclusively expressed in placenta. Expressed at much lower level in other tissues. Expressed in fetal eye (18 weeks)in the retinal pigment epithelium (RPE), the choroid, Bruch's membrane and in the sclera. Not expressed in the neural retina. Present at high level in cytotrophoblasts as compared with syncytiotrophoblasts at 8-9 weeks of pregnancy (at protein level). Levels in the serum increase during pregnancy (at protein level).

It localises to the secreted. Its subcellular location is the extracellular space. It is found in the extracellular matrix. In terms of biological role, fibrillins are structural components of 10-12 nm extracellular calcium-binding microfibrils, which occur either in association with elastin or in elastin-free bundles. Fibrillin-2-containing microfibrils regulate the early process of elastic fiber assembly. Regulates osteoblast maturation by controlling TGF-beta bioavailability and calibrating TGF-beta and BMP levels, respectively. Hormone secreted by trophoblasts that promotes trophoblast invasiveness. Has glucogenic activity: is able to increase plasma glucose levels. This is Fibrillin-2 from Homo sapiens (Human).